Consider the following 140-residue polypeptide: Seminal plasma protein A3 (140 aa).

The N-terminal stretch at Met-1–Gly-25 is a signal peptide. 2 Fibronectin type-II domains span residues Thr-49 to Lys-93 and Asn-94 to Cys-140. 4 disulfides stabilise this stretch: Cys-54–Cys-78, Cys-68–Cys-91, Cys-99–Cys-125, and Cys-113–Cys-140.

The protein belongs to the seminal plasma protein family.

The protein resides in the secreted. Functionally, the BSP-A proteins from seminal plasma exhibit both simulatory and inhibitory actions on the release of pituitary gonadotropins. The exact function of these proteins is not known. The protein is Seminal plasma protein A3 of Bos taurus (Bovine).